The following is an 889-amino-acid chain: Valine--tRNA ligase (889 aa).

The 'HIGH' region signature appears at Pro-50 to His-60. A 'KMSKS' region motif is present at residues Lys-532–Ser-536. Lys-535 provides a ligand contact to ATP. Positions Leu-816 to Ala-889 form a coiled coil.

The protein belongs to the class-I aminoacyl-tRNA synthetase family. ValS type 1 subfamily. As to quaternary structure, monomer.

It localises to the cytoplasm. The enzyme catalyses tRNA(Val) + L-valine + ATP = L-valyl-tRNA(Val) + AMP + diphosphate. In terms of biological role, catalyzes the attachment of valine to tRNA(Val). As ValRS can inadvertently accommodate and process structurally similar amino acids such as threonine, to avoid such errors, it has a 'posttransfer' editing activity that hydrolyzes mischarged Thr-tRNA(Val) in a tRNA-dependent manner. The chain is Valine--tRNA ligase from Lactiplantibacillus plantarum (strain ATCC BAA-793 / NCIMB 8826 / WCFS1) (Lactobacillus plantarum).